The chain runs to 989 residues: DEAD-box ATP-dependent RNA helicase 45 (989 aa).

2 stretches are compositionally biased toward basic and acidic residues: residues 1-39 (MLEK…KRCD) and 64-101 (RDSK…EKEK). 2 disordered regions span residues 1 to 248 (MLEK…AADE) and 305 to 330 (QGED…DDEE). Positions 88-182 (LKRDRERRER…ELKRQNEEAQ (95 aa)) form a coiled coil. The residue at position 119 (S119) is a Phosphoserine. Positions 134-179 (SRHGDDDVEKKTRDEQVEDEQKQLAEEVEKRRRRVQEWQELKRQNE) are enriched in basic and acidic residues. The residue at position 200 (S200) is a Phosphoserine. Residues 203 to 222 (EVKSDSEMDVDRDTKLENGG) are compositionally biased toward basic and acidic residues. The span at 230-239 (ENETAVTVSE) shows a compositional bias: polar residues. The segment covering 321–330 (DPSLDEDDEE) has biased composition (acidic residues). The Q motif signature appears at 396 to 424 (QFWHQTGLTSKILDTLKKLNYEKPMPIQA). The Helicase ATP-binding domain maps to 427–605 (LPIIMSGRDC…RKVLNKPVEI (179 aa)). 440–447 (AKTGSGKT) lines the ATP pocket. The DEAD box signature appears at 553-556 (DEAD). Residues 590-748 (QVETLARKVL…PVPDDVKAVA (159 aa)) form the Helicase C-terminal domain.

It belongs to the DEAD box helicase family. DDX46/PRP5 subfamily.

It catalyses the reaction ATP + H2O = ADP + phosphate + H(+). The protein is DEAD-box ATP-dependent RNA helicase 45 (RH45) of Arabidopsis thaliana (Mouse-ear cress).